The sequence spans 153 residues: Bifunctional protein GAL10 (153 aa).

The galactowaldenase stretch occupies residues Met-1–Glu-153.

The protein in the N-terminal section; belongs to the NAD(P)-dependent epimerase/dehydratase family. It in the C-terminal section; belongs to the aldose epimerase family. Requires NAD(+) as cofactor.

The catalysed reaction is UDP-alpha-D-glucose = UDP-alpha-D-galactose. It catalyses the reaction alpha-D-glucose = beta-D-glucose. The protein operates within carbohydrate metabolism; galactose metabolism. Its pathway is carbohydrate metabolism; hexose metabolism. Its function is as follows. Mutarotase converts alpha-aldose to the beta-anomer. It is active on D-glucose, L-arabinose, D-xylose, D-galactose, maltose and lactose. The polypeptide is Bifunctional protein GAL10 (GAL10) (Candida maltosa (Yeast)).